Here is a 361-residue protein sequence, read N- to C-terminus: UDP-3-O-acylglucosamine N-acyltransferase (361 aa).

Catalysis depends on H253, which acts as the Proton acceptor.

This sequence belongs to the transferase hexapeptide repeat family. LpxD subfamily. In terms of assembly, homotrimer.

The enzyme catalyses a UDP-3-O-[(3R)-3-hydroxyacyl]-alpha-D-glucosamine + a (3R)-hydroxyacyl-[ACP] = a UDP-2-N,3-O-bis[(3R)-3-hydroxyacyl]-alpha-D-glucosamine + holo-[ACP] + H(+). It participates in bacterial outer membrane biogenesis; LPS lipid A biosynthesis. Its function is as follows. Catalyzes the N-acylation of UDP-3-O-acylglucosamine using 3-hydroxyacyl-ACP as the acyl donor. Is involved in the biosynthesis of lipid A, a phosphorylated glycolipid that anchors the lipopolysaccharide to the outer membrane of the cell. The chain is UDP-3-O-acylglucosamine N-acyltransferase from Burkholderia mallei (strain ATCC 23344).